A 1517-amino-acid chain; its full sequence is uncharacterized protein (1517 aa).

Positions 1–13 are enriched in polar residues; it reads MNQFPNQPGNFGQ. Residues 1–26 are disordered; sequence MNQFPNQPGNFGQNYYKPVQGSIPAN. Residues Asn-35, Asn-40, and Asn-76 are each glycosylated (N-linked (GlcNAc...) asparagine). 5 helical membrane passes run 231–251, 397–417, 510–530, 612–632, and 720–740; these read AIDF…AVPI, AIGL…TVWC, FVPL…KDWI, PNIV…FFAL, and VFDC…VVLL. The N-linked (GlcNAc...) asparagine glycan is linked to Asn-917. 4 consecutive transmembrane segments (helical) span residues 956-976, 985-1005, 1051-1071, and 1114-1134; these read FVYA…VPPL, VPAF…VNSE, VKLD…AFWS, and GIGF…TYLL. A glycan (N-linked (GlcNAc...) asparagine) is linked at Asn-1178. Residues 1261–1281 traverse the membrane as a helical segment; the sequence is PYALPLLDSGMVPVSTQLAIV. N-linked (GlcNAc...) asparagine glycosylation is present at Asn-1321. The next 2 membrane-spanning stretches (helical) occupy residues 1353–1373 and 1408–1428; these read APVV…TFEV and VVVV…PVVI.

The protein to S.pombe SpAC22F3.04.

The protein resides in the membrane. This is an uncharacterized protein from Schizosaccharomyces pombe (strain 972 / ATCC 24843) (Fission yeast).